A 93-amino-acid polypeptide reads, in one-letter code: Protein IDA-LIKE 4 (93 aa).

The first 35 residues, 1–35 (MYPTRPHYWRRRLSINRPQAFLLLILCLFFIHHCD), serve as a signal peptide directing secretion.

Expressed in mainly in buds. Lower levels in roots. Detected at the base of pedicel, in the floral and funicule abscission zones, in vascular tissues, in guard cells of young seedlings and in hydathodes.

The protein resides in the secreted. It is found in the extracellular space. Functionally, may be involved in floral abscission. In Arabidopsis thaliana (Mouse-ear cress), this protein is Protein IDA-LIKE 4 (IDL4).